The sequence spans 467 residues: MAAAARARVTHLLRHLQSTACQCPTHSHTYSQVPGLSPSGKTTDYAFEMAVSNIRYGAGVTKEVGMDLQNMGAKNVCLMTDKNLSQLPPVQIVMDSLSKNGISFQVYDNVRVEPTDGSFMDAIEFAKKGAFDAYVAVGGGSTMDTCKAANLYACSPHSEFLDYVNAPIGKGKPVTVPLKPLIAVPTTSGTGSETTGVAIFDYEHLKVKTGIASRAIKPTLGLVDPLHTLHMPCQVVANSGFDVLCHALESYTAIPYSMRSPCPSNPIQRPAYQGSNPISDIWAVHALRIVAKYLKRAVRNPDDLEARSSMHLASAFAGIGFGNAGVHLCHGMSYPISGLVKTYKAKEYNVDHPLVPHGLSVVLTSPAVFTFTAQMFPERHLETAEILGANIRTAKIQDAGPVLADALRKFLFDLNVDDGLAALGYSKDDIPSLVKGTLPQERVTKLAPRAQSEEDLSALFEASMKLY.

N6-acetyllysine is present on lysine 445. Serine 452 is modified (phosphoserine).

It belongs to the iron-containing alcohol dehydrogenase family. Hydroxyacid-oxoacid transhydrogenase subfamily. In terms of tissue distribution, expressed in kidney and liver.

It localises to the mitochondrion. The catalysed reaction is (S)-3-hydroxybutanoate + 2-oxoglutarate = (R)-2-hydroxyglutarate + acetoacetate. It catalyses the reaction 4-hydroxybutanoate + 2-oxoglutarate = (R)-2-hydroxyglutarate + succinate semialdehyde. Functionally, catalyzes the cofactor-independent reversible oxidation of gamma-hydroxybutyrate (GHB) to succinic semialdehyde (SSA) coupled to reduction of 2-ketoglutarate (2-KG) to D-2-hydroxyglutarate (D-2-HG). L-3-hydroxybutyrate (L-3-OHB) is also a substrate for HOT when using 2-KG as hydrogen acceptor, resulting in the formation of D-2-HG. This is Hydroxyacid-oxoacid transhydrogenase, mitochondrial (Adhfe1) from Rattus norvegicus (Rat).